The primary structure comprises 225 residues: Probable GTP-binding protein EngB (225 aa).

In terms of domain architecture, EngB-type G spans 31-204; it reads VGVEIAFAGR…LGILDSWCKP (174 aa). Residues 39–46, 65–69, 83–86, 150–153, and 183–185 each bind GTP; these read GRSNAGKS, GRTQL, DLPG, TKAD, and FSS. Mg(2+)-binding residues include Ser46 and Thr67.

The protein belongs to the TRAFAC class TrmE-Era-EngA-EngB-Septin-like GTPase superfamily. EngB GTPase family. Mg(2+) is required as a cofactor.

Functionally, necessary for normal cell division and for the maintenance of normal septation. The chain is Probable GTP-binding protein EngB from Shewanella pealeana (strain ATCC 700345 / ANG-SQ1).